Here is a 178-residue protein sequence, read N- to C-terminus: MYHQLILMALIGVIMANVVPFSMSNIPEEYKEFIPEEVKNFYKNLTQEDRQILRELASKHATFTNEDAALEALKNKSDKLYQKAVELRNFVKAKIDSLKPDAKTFVDEIIAKVRSLRPEDGQKLDMEKIKQAARDIIAKYEALNEETKEELKATFPNTTKIITNEKFKRIANSFLQKN.

The first 16 residues, 1–16 (MYHQLILMALIGVIMA), serve as a signal peptide directing secretion. N44 and N75 each carry an N-linked (GlcNAc...) asparagine glycan. Coiled coils occupy residues 67–89 (DAAL…ELRN) and 123–154 (KLDM…LKAT). N157 carries an N-linked (GlcNAc...) asparagine glycan.

It belongs to the fatty-acid and retinol-binding protein (FARBP) family. Post-translationally, N-glycosylated.

It localises to the secreted. Functionally, binds retinol and different fatty acids. The protein is Fatty-acid and retinol-binding protein 1 of Onchocerca gutturosa.